The chain runs to 161 residues: Endoribonuclease YbeY (161 aa).

Residues His-121, His-125, and His-131 each coordinate Zn(2+).

This sequence belongs to the endoribonuclease YbeY family. Requires Zn(2+) as cofactor.

It localises to the cytoplasm. Single strand-specific metallo-endoribonuclease involved in late-stage 70S ribosome quality control and in maturation of the 3' terminus of the 16S rRNA. In Xylella fastidiosa (strain 9a5c), this protein is Endoribonuclease YbeY.